Here is a 508-residue protein sequence, read N- to C-terminus: WD repeat-containing protein JIP5 (508 aa).

WD repeat units lie at residues 46–94 (LATG…GVET), 105–144 (RHKG…VVKK), 150–189 (GQNV…QTNL), 194–234 (HNGD…EGDF), 252–293 (DQED…LADQ), and 344–381 (SKLD…QLTP). Positions 372-508 (DSEKSEQLTP…THGIRRFEGL (137 aa)) are disordered. Positions 491–508 (IKPERSMKTHGIRRFEGL) are enriched in basic and acidic residues.

Belongs to the WD repeat WDR55 family.

The protein resides in the nucleus. It is found in the nucleolus. This Eremothecium gossypii (strain ATCC 10895 / CBS 109.51 / FGSC 9923 / NRRL Y-1056) (Yeast) protein is WD repeat-containing protein JIP5 (JIP5).